The sequence spans 579 residues: Aspartate--tRNA(Asp/Asn) ligase (579 aa).

L-aspartate is bound at residue glutamate 169. The aspartate stretch occupies residues 193-196; sequence QLFK. Position 215 (arginine 215) interacts with L-aspartate. ATP-binding positions include 215–217 and glutamine 224; that span reads RDE. Histidine 437 serves as a coordination point for L-aspartate. Residue glutamate 471 coordinates ATP. Arginine 478 is an L-aspartate binding site. 523–526 contacts ATP; the sequence is GWDR. The tract at residues 551–579 is disordered; sequence DPLTGAPTPITAEQRREAGVDAVPEQATS.

It belongs to the class-II aminoacyl-tRNA synthetase family. Type 1 subfamily. Homodimer.

Its subcellular location is the cytoplasm. It carries out the reaction tRNA(Asx) + L-aspartate + ATP = L-aspartyl-tRNA(Asx) + AMP + diphosphate. Functionally, aspartyl-tRNA synthetase with relaxed tRNA specificity since it is able to aspartylate not only its cognate tRNA(Asp) but also tRNA(Asn). Reaction proceeds in two steps: L-aspartate is first activated by ATP to form Asp-AMP and then transferred to the acceptor end of tRNA(Asp/Asn). The chain is Aspartate--tRNA(Asp/Asn) ligase from Thermobifida fusca (strain YX).